The chain runs to 251 residues: NLP effector protein Pc129485 (251 aa).

An N-terminal signal peptide occupies residues 1-19 (MNFRIVLLVLVASLAGAQA). The short motif at 127–133 (GHRHNWE) is the Hepta-peptide GHRHDWE motif element. Asparagine 146 and asparagine 218 each carry an N-linked (GlcNAc...) asparagine glycan.

It belongs to the Necrosis inducing protein (NPP1) family.

The protein localises to the secreted. Secreted effector that contributes strongly to virulence during infection by P.capsici. In Phytophthora capsici, this protein is NLP effector protein Pc129485.